Here is a 140-residue protein sequence, read N- to C-terminus: Cystatin-C (140 aa).

The signal sequence occupies residues 1 to 20 (MASPLRSLLFLLAVLAVAWA). Positions 75 to 79 (QLVAG) match the Secondary area of contact motif. 2 cysteine pairs are disulfide-bonded: Cys93/Cys103 and Cys117/Cys137.

Belongs to the cystatin family.

The protein localises to the secreted. Its function is as follows. As an inhibitor of cysteine proteinases, this protein is thought to serve an important physiological role as a local regulator of this enzyme activity. In Mus musculus (Mouse), this protein is Cystatin-C (Cst3).